Here is a 363-residue protein sequence, read N- to C-terminus: UDP-N-acetylglucosamine--N-acetylmuramyl-(pentapeptide) pyrophosphoryl-undecaprenol N-acetylglucosamine transferase (363 aa).

UDP-N-acetyl-alpha-D-glucosamine-binding positions include 14 to 16, asparagine 122, arginine 163, serine 190, and glutamine 285; that span reads TGG.

This sequence belongs to the glycosyltransferase 28 family. MurG subfamily.

The protein resides in the cell inner membrane. The enzyme catalyses di-trans,octa-cis-undecaprenyl diphospho-N-acetyl-alpha-D-muramoyl-L-alanyl-D-glutamyl-meso-2,6-diaminopimeloyl-D-alanyl-D-alanine + UDP-N-acetyl-alpha-D-glucosamine = di-trans,octa-cis-undecaprenyl diphospho-[N-acetyl-alpha-D-glucosaminyl-(1-&gt;4)]-N-acetyl-alpha-D-muramoyl-L-alanyl-D-glutamyl-meso-2,6-diaminopimeloyl-D-alanyl-D-alanine + UDP + H(+). Its pathway is cell wall biogenesis; peptidoglycan biosynthesis. In terms of biological role, cell wall formation. Catalyzes the transfer of a GlcNAc subunit on undecaprenyl-pyrophosphoryl-MurNAc-pentapeptide (lipid intermediate I) to form undecaprenyl-pyrophosphoryl-MurNAc-(pentapeptide)GlcNAc (lipid intermediate II). The protein is UDP-N-acetylglucosamine--N-acetylmuramyl-(pentapeptide) pyrophosphoryl-undecaprenol N-acetylglucosamine transferase of Prochlorococcus marinus (strain AS9601).